Here is a 229-residue protein sequence, read N- to C-terminus: Germin-like protein 12-2 (229 aa).

An N-terminal signal peptide occupies residues 1–22 (MASSNFFLLTALIALVATQAMA). Cys32 and Cys47 are oxidised to a cystine. The Cupin type-1 domain maps to 62–217 (ANLDKPMDTT…AFQVDKKAVD (156 aa)). Asn78 is a glycosylation site (N-linked (GlcNAc...) asparagine). Positions 111, 113, 118, and 162 each coordinate Mn(2+).

The protein belongs to the germin family. Oligomer (believed to be a pentamer but probably hexamer).

The protein localises to the secreted. It is found in the extracellular space. Its subcellular location is the apoplast. Its function is as follows. May play a role in plant defense. Probably has no oxalate oxidase activity even if the active site is conserved. The polypeptide is Germin-like protein 12-2 (Oryza sativa subsp. japonica (Rice)).